We begin with the raw amino-acid sequence, 241 residues long: Carboxy-S-adenosyl-L-methionine synthase (241 aa).

S-adenosyl-L-methionine contacts are provided by residues tyrosine 38, 63 to 65, 88 to 89, 116 to 117, asparagine 131, and arginine 198; these read GCS, DN, and DI.

This sequence belongs to the class I-like SAM-binding methyltransferase superfamily. Cx-SAM synthase family. In terms of assembly, homodimer.

The catalysed reaction is prephenate + S-adenosyl-L-methionine = carboxy-S-adenosyl-L-methionine + 3-phenylpyruvate + H2O. Functionally, catalyzes the conversion of S-adenosyl-L-methionine (SAM) to carboxy-S-adenosyl-L-methionine (Cx-SAM). In Mannheimia succiniciproducens (strain KCTC 0769BP / MBEL55E), this protein is Carboxy-S-adenosyl-L-methionine synthase.